We begin with the raw amino-acid sequence, 531 residues long: Achacin (531 aa).

The first 22 residues, 1 to 22, serve as a signal peptide directing secretion; the sequence is MLLLNSALFILCLVCWLPGTSS. Residues 23-29 constitute a propeptide that is removed on maturation; it reads SRVLTRR. N-linked (GlcNAc...) asparagine glycosylation is found at asparagine 112, asparagine 150, asparagine 308, and asparagine 392.

The protein to A.kurodai aplysianin-A. In terms of assembly, homodimer. Collar tissue.

Antibacterial glycoprotein. The sequence is that of Achacin from Lissachatina fulica (Giant African land snail).